The chain runs to 298 residues: Elongation factor Ts (298 aa).

The segment at Thr-78–Val-81 is involved in Mg(2+) ion dislocation from EF-Tu.

Belongs to the EF-Ts family.

It is found in the cytoplasm. Functionally, associates with the EF-Tu.GDP complex and induces the exchange of GDP to GTP. It remains bound to the aminoacyl-tRNA.EF-Tu.GTP complex up to the GTP hydrolysis stage on the ribosome. This is Elongation factor Ts from Mycoplasmopsis agalactiae (strain NCTC 10123 / CIP 59.7 / PG2) (Mycoplasma agalactiae).